The sequence spans 360 residues: DAZ-associated protein 1 (360 aa).

RRM domains follow at residues Gly10–Pro97 and Asn114–Pro191. Disordered regions lie at residues His73 to Ile116 and Val184 to Phe345. 2 stretches are compositionally biased toward basic and acidic residues: residues Gln91–Arg112 and Val184–Lys195. Positions Gly203–Ser231 are enriched in polar residues. Residues Thr242 to Gly253 show a composition bias toward gly residues. A compositionally biased stretch (pro residues) spans Gly271–Asp301. Over residues Gln328 to Phe345 the composition is skewed to polar residues.

Component of a mRNP complex, at least composed of DAZAP1, IGF2BP3-A, STAU and VgRBP60. Binds to the 3'-UTR of Vg1 mRNA. Interacts with profilin, a protein involved in actin assembly. Interacts with VgRBP71. In terms of tissue distribution, expressed in oocytes.

It localises to the cytoplasm. RNA-binding protein, which is required during gametogenesis. May be involved in the actin-dependent anchoring of Vg1 mRNA in the vegetal cortex of the oocyte. The chain is DAZ-associated protein 1 (dazap1) from Xenopus laevis (African clawed frog).